The primary structure comprises 459 residues: tRNA-2-methylthio-N(6)-dimethylallyladenosine synthase (459 aa).

In terms of domain architecture, MTTase N-terminal spans 1 to 116; the sequence is MRAHLITYGC…IGKALETNER (116 aa). The [4Fe-4S] cluster site is built by cysteine 10, cysteine 46, cysteine 79, cysteine 148, cysteine 152, and cysteine 155. The region spanning 134 to 367 is the Radical SAM core domain; sequence PQGKLQAHLT…IAKQKEWSAR (234 aa). The region spanning 370–433 is the TRAM domain; sequence AAKVGTIQEV…PHMLYGRLIG (64 aa).

This sequence belongs to the methylthiotransferase family. MiaB subfamily. As to quaternary structure, monomer. The cofactor is [4Fe-4S] cluster.

It localises to the cytoplasm. The catalysed reaction is N(6)-dimethylallyladenosine(37) in tRNA + (sulfur carrier)-SH + AH2 + 2 S-adenosyl-L-methionine = 2-methylsulfanyl-N(6)-dimethylallyladenosine(37) in tRNA + (sulfur carrier)-H + 5'-deoxyadenosine + L-methionine + A + S-adenosyl-L-homocysteine + 2 H(+). Functionally, catalyzes the methylthiolation of N6-(dimethylallyl)adenosine (i(6)A), leading to the formation of 2-methylthio-N6-(dimethylallyl)adenosine (ms(2)i(6)A) at position 37 in tRNAs that read codons beginning with uridine. The chain is tRNA-2-methylthio-N(6)-dimethylallyladenosine synthase from Deinococcus geothermalis (strain DSM 11300 / CIP 105573 / AG-3a).